Consider the following 78-residue polypeptide: Large ribosomal subunit protein bL28 (78 aa).

The protein belongs to the bacterial ribosomal protein bL28 family.

The sequence is that of Large ribosomal subunit protein bL28 from Synechococcus sp. (strain WH7803).